Consider the following 446-residue polypeptide: Ribosomal protein uS12 methylthiotransferase RimO (446 aa).

The 113-residue stretch at 10–122 (KTLHMVSLGC…IDELVNEKRS (113 aa)) folds into the MTTase N-terminal domain. 6 residues coordinate [4Fe-4S] cluster: Cys-19, Cys-53, Cys-85, Cys-154, Cys-158, and Cys-161. Residues 140–369 (TGSSYHAYVK…GEIISQTTQE (230 aa)) form the Radical SAM core domain. The 75-residue stretch at 372-446 (ESEVGKTFEV…GDKLLATVIK (75 aa)) folds into the TRAM domain.

The protein belongs to the methylthiotransferase family. RimO subfamily. [4Fe-4S] cluster serves as cofactor.

The protein resides in the cytoplasm. The catalysed reaction is L-aspartate(89)-[ribosomal protein uS12]-hydrogen + (sulfur carrier)-SH + AH2 + 2 S-adenosyl-L-methionine = 3-methylsulfanyl-L-aspartate(89)-[ribosomal protein uS12]-hydrogen + (sulfur carrier)-H + 5'-deoxyadenosine + L-methionine + A + S-adenosyl-L-homocysteine + 2 H(+). In terms of biological role, catalyzes the methylthiolation of an aspartic acid residue of ribosomal protein uS12. The protein is Ribosomal protein uS12 methylthiotransferase RimO of Aliarcobacter butzleri (strain RM4018) (Arcobacter butzleri).